A 259-amino-acid polypeptide reads, in one-letter code: Global transcriptional regulator CodY (259 aa).

The tract at residues 1–155 is GAF domain; sequence MALLQKTRII…GATVVGMEIL (155 aa). The segment at residues 203–222 is a DNA-binding region (H-T-H motif); that stretch reads ASKIADRVGITRSVIVNALR. Serine 215 is modified (phosphoserine).

The protein belongs to the CodY family.

The protein localises to the cytoplasm. DNA-binding global transcriptional regulator which is involved in the adaptive response to starvation and acts by directly or indirectly controlling the expression of numerous genes in response to nutrient availability. During rapid exponential growth, CodY is highly active and represses genes whose products allow adaptation to nutrient depletion. This is Global transcriptional regulator CodY from Bacillus velezensis (strain DSM 23117 / BGSC 10A6 / LMG 26770 / FZB42) (Bacillus amyloliquefaciens subsp. plantarum).